The chain runs to 461 residues: Elongation factor 1-alpha, oocyte form (461 aa).

G2 bears the N,N,N-trimethylglycine mark. The region spanning 5-242 (KIHINIVVIG…DCIIPPQRPT (238 aa)) is the tr-type G domain. The tract at residues 14–21 (GHVDSGKS) is G1. GTP is bound at residue 14–21 (GHVDSGKS). The G2 stretch occupies residues 70–74 (GITID). Residues 91 to 94 (DAPG) are G3. GTP-binding positions include 91–95 (DAPGH) and 153–156 (NKMD). The segment at 153–156 (NKMD) is G4. Residues 194-196 (SGW) form a G5 region. Residues E301 and E374 each carry the 5-glutamyl glycerylphosphorylethanolamine modification.

This sequence belongs to the TRAFAC class translation factor GTPase superfamily. Classic translation factor GTPase family. EF-Tu/EF-1A subfamily. Oocyte.

It localises to the cytoplasm. Functionally, this protein promotes the GTP-dependent binding of aminoacyl-tRNA to the A-site of ribosomes during protein biosynthesis. The sequence is that of Elongation factor 1-alpha, oocyte form from Xenopus laevis (African clawed frog).